The chain runs to 204 residues: Small ribosomal subunit protein uS7 (204 aa).

M1 is subject to N-acetylmethionine. T2 bears the N-acetylthreonine; in 40S ribosomal protein S5, N-terminally processed mark. T14 is subject to Phosphothreonine. K47 bears the N6-acetyllysine; alternate mark. K47 is covalently cross-linked (Glycyl lysine isopeptide (Lys-Gly) (interchain with G-Cter in SUMO2); alternate). The residue at position 142 (S142) is a Phosphoserine.

Belongs to the universal ribosomal protein uS7 family. In terms of assembly, component of the small ribosomal subunit. Part of the small subunit (SSU) processome, composed of more than 70 proteins and the RNA chaperone small nucleolar RNA (snoRNA) U3.

It is found in the cytoplasm. The protein localises to the nucleus. The protein resides in the nucleolus. Functionally, component of the small ribosomal subunit. The ribosome is a large ribonucleoprotein complex responsible for the synthesis of proteins in the cell. Part of the small subunit (SSU) processome, first precursor of the small eukaryotic ribosomal subunit. During the assembly of the SSU processome in the nucleolus, many ribosome biogenesis factors, an RNA chaperone and ribosomal proteins associate with the nascent pre-rRNA and work in concert to generate RNA folding, modifications, rearrangements and cleavage as well as targeted degradation of pre-ribosomal RNA by the RNA exosome. This is Small ribosomal subunit protein uS7 (Rps5) from Rattus norvegicus (Rat).